A 1700-amino-acid chain; its full sequence is Rho guanine nucleotide exchange factor 28 (1700 aa).

Positions 288–335 (TERATMPSGAAETEEEVRNLESGRSPSEEEEDGQLVKSQADGPSEQED) are disordered. Phosphoserine is present on residues Ser-312, Ser-314, and Ser-478. The segment at 483–525 (VADSEEEGRSEPPICYAVGSQSSPRTGLPGGDELDSFDANTEP) is disordered. Residue Ser-623 is modified to Phosphoserine. A Phorbol-ester/DAG-type zinc finger spans residues 651 to 698 (RHQFVPGTFSGVLQCSGCDKTLLGKESLQCANCKANTHKGCKDTVPPC). Residues 709–720 (NKPQTILGSSSV) show a composition bias toward polar residues. Disordered stretches follow at residues 709–761 (NKPQ…VPGT) and 774–799 (ESEGDSNSWRSRSHSDELFQSMGSSP). The segment covering 728–737 (LSLHPSPSMP) has biased composition (low complexity). A compositionally biased stretch (polar residues) spans 774–783 (ESEGDSNSWR). The DH domain occupies 848 to 1043 (KRQDVIFELM…KDMIAAVDLK (196 aa)). The PH domain occupies 1085 to 1187 (ALLHDGLVYW…WMRRIQQAVE (103 aa)). Residues 1186-1207 (VESCPEEEGGRTSESDEERRKA) are disordered. Over residues 1193–1207 (EGGRTSESDEERRKA) the composition is skewed to basic and acidic residues. The tract at residues 1294–1303 (DVSQPSEEGP) is interaction with PTK2/FAK1; required for regulation of axonal branching and synapse formation. Residues 1369-1380 (IIQAIQNLTRLL) are mediates cytoplasmic retention and interaction with YWHAH. The interval 1421–1700 (QEKSRYLEKH…DGAEENIVYL (280 aa)) is interaction with microtubules. The stretch at 1473-1522 (ERECQSQEELLLRHRSELDHQLQEYQQNLERLREGQRMVERERQRMRDQQ) forms a coiled coil. The RNA-binding stretch occupies residues 1493–1524 (QLQEYQQNLERLREGQRMVERERQRMRDQQGL). Residue Ser-1535 is modified to Phosphoserine. Positions 1563–1576 (FLNDAFTHMSLNTS) are mediates cytoplasmic retention and interaction with MAPK8IP1. Residues 1574–1598 (NTSNKPNPSGAPWDAHPPGGSHLDL) form a disordered region. Position 1604 is a phosphoserine (Ser-1604). Positions 1612–1700 (VSQPSDVNSE…DGAEENIVYL (89 aa)) are disordered. Over residues 1613 to 1623 (SQPSDVNSELW) the composition is skewed to polar residues. Positions 1633 to 1642 (ARQESIKDSC) are enriched in basic and acidic residues. The segment covering 1647-1672 (DLNSFQTESPDPQDSNQRGPQPQTLI) has biased composition (polar residues).

Homooligomer; forms cytoplasmic aggregates. Forms a complex with MAPK8 and MAPK8IP1. Interacts with RHOA. Interacts with microtubules. Interacts with YWHAE and YWHAH. Interacts with PTK2/FAK1. Interacts with NEFL. Interacts with CTNND2; prevents interaction with RHOA. In terms of processing, phosphorylated on tyrosine upon stimulation of cells by laminin.

It localises to the cytoplasm. The protein resides in the cell membrane. Its function is as follows. Functions as a RHOA-specific guanine nucleotide exchange factor regulating signaling pathways downstream of integrins and growth factor receptors. Functions in axonal branching, synapse formation and dendritic morphogenesis. Also functions in focal adhesion formation, cell motility and B-lymphocytes activation. May regulate NEFL expression and aggregation and play a role in apoptosis. The sequence is that of Rho guanine nucleotide exchange factor 28 (Arhgef28) from Rattus norvegicus (Rat).